A 197-amino-acid chain; its full sequence is Histone chaperone asf1b-A (197 aa).

It belongs to the ASF1 family. In terms of assembly, interacts with histone H3 and histone H4.

The protein localises to the nucleus. Functionally, histone chaperone that facilitates histone deposition and histone exchange and removal during nucleosome assembly and disassembly. The chain is Histone chaperone asf1b-A (asf1ba) from Danio rerio (Zebrafish).